Consider the following 270-residue polypeptide: Probable inositol 1-monophosphatase ImpA (270 aa).

Positions 69, 85, 87, and 88 each coordinate Mg(2+). E69 serves as a coordination point for substrate. Residues 87 to 90, R187, and D216 contribute to the substrate site; that span reads IDGT. A Mg(2+)-binding site is contributed by D216.

It belongs to the inositol monophosphatase superfamily. Mg(2+) is required as a cofactor.

The catalysed reaction is a myo-inositol phosphate + H2O = myo-inositol + phosphate. The protein operates within polyol metabolism; myo-inositol biosynthesis; myo-inositol from D-glucose 6-phosphate: step 2/2. In terms of biological role, catalyzes the dephosphorylation of inositol 1-phosphate (I-1-P) to yield free myo-inositol, a key metabolite in mycobacteria. This chain is Probable inositol 1-monophosphatase ImpA (impA), found in Mycobacterium tuberculosis (strain ATCC 25618 / H37Rv).